The following is a 249-amino-acid chain: Flagellar L-ring protein (249 aa).

The first 25 residues, 1–25, serve as a signal peptide directing secretion; sequence MSRLRTSHALRTAAALVAVGCLASG. A lipid anchor (N-palmitoyl cysteine) is attached at Cys-26. A lipid anchor (S-diacylglycerol cysteine) is attached at Cys-26.

The protein belongs to the FlgH family. As to quaternary structure, the basal body constitutes a major portion of the flagellar organelle and consists of four rings (L,P,S, and M) mounted on a central rod.

It localises to the cell outer membrane. The protein localises to the bacterial flagellum basal body. Functionally, assembles around the rod to form the L-ring and probably protects the motor/basal body from shearing forces during rotation. The protein is Flagellar L-ring protein of Afipia carboxidovorans (strain ATCC 49405 / DSM 1227 / KCTC 32145 / OM5) (Oligotropha carboxidovorans).